The chain runs to 405 residues: Tryptophan synthase beta chain (405 aa).

Lys-95 is modified (N6-(pyridoxal phosphate)lysine).

The protein belongs to the TrpB family. In terms of assembly, tetramer of two alpha and two beta chains. Pyridoxal 5'-phosphate serves as cofactor.

The enzyme catalyses (1S,2R)-1-C-(indol-3-yl)glycerol 3-phosphate + L-serine = D-glyceraldehyde 3-phosphate + L-tryptophan + H2O. Its pathway is amino-acid biosynthesis; L-tryptophan biosynthesis; L-tryptophan from chorismate: step 5/5. In terms of biological role, the beta subunit is responsible for the synthesis of L-tryptophan from indole and L-serine. The chain is Tryptophan synthase beta chain from Pseudomonas putida (strain GB-1).